The sequence spans 132 residues: uncharacterized protein (132 aa).

The signal sequence occupies residues 1–19 (MKKALFLVGLVFTAGVISS). Cys20 is lipidated: N-palmitoyl cysteine. A lipid anchor (S-diacylglycerol cysteine) is attached at Cys20.

The protein resides in the cell membrane. This is an uncharacterized protein from Aquifex aeolicus (strain VF5).